The sequence spans 297 residues: Homoserine kinase (297 aa).

Residue 82 to 92 coordinates ATP; it reads PLTRGLGSSAS.

The protein belongs to the GHMP kinase family. Homoserine kinase subfamily.

Its subcellular location is the cytoplasm. It carries out the reaction L-homoserine + ATP = O-phospho-L-homoserine + ADP + H(+). It participates in amino-acid biosynthesis; L-threonine biosynthesis; L-threonine from L-aspartate: step 4/5. In terms of biological role, catalyzes the ATP-dependent phosphorylation of L-homoserine to L-homoserine phosphate. The chain is Homoserine kinase from Bacillus cereus (strain ZK / E33L).